Consider the following 422-residue polypeptide: UDP-N-acetylglucosamine 1-carboxyvinyltransferase (422 aa).

23–24 (KN) provides a ligand contact to phosphoenolpyruvate. Arg92 is a binding site for UDP-N-acetyl-alpha-D-glucosamine. The Proton donor role is filled by Cys116. Position 116 is a 2-(S-cysteinyl)pyruvic acid O-phosphothioketal (Cys116). Residues 121–125 (RPVDL), 161–164 (KVSV), Asp306, and Ile328 contribute to the UDP-N-acetyl-alpha-D-glucosamine site.

This sequence belongs to the EPSP synthase family. MurA subfamily.

It is found in the cytoplasm. It carries out the reaction phosphoenolpyruvate + UDP-N-acetyl-alpha-D-glucosamine = UDP-N-acetyl-3-O-(1-carboxyvinyl)-alpha-D-glucosamine + phosphate. It participates in cell wall biogenesis; peptidoglycan biosynthesis. Functionally, cell wall formation. Adds enolpyruvyl to UDP-N-acetylglucosamine. The polypeptide is UDP-N-acetylglucosamine 1-carboxyvinyltransferase (Aliivibrio salmonicida (strain LFI1238) (Vibrio salmonicida (strain LFI1238))).